Consider the following 238-residue polypeptide: Flagellar L-ring protein (238 aa).

The first 23 residues, 1-23 (MVKLFSYKIKYYLTAFFIIIIQS), serve as a signal peptide directing secretion. Residue C24 is the site of N-palmitoyl cysteine attachment. Residue C24 is the site of S-diacylglycerol cysteine attachment.

It belongs to the FlgH family. In terms of assembly, the basal body constitutes a major portion of the flagellar organelle and consists of four rings (L,P,S, and M) mounted on a central rod.

The protein localises to the cell outer membrane. It localises to the bacterial flagellum basal body. Functionally, assembles around the rod to form the L-ring and probably protects the motor/basal body from shearing forces during rotation. This Buchnera aphidicola subsp. Schizaphis graminum (strain Sg) protein is Flagellar L-ring protein.